Here is a 505-residue protein sequence, read N- to C-terminus: Deoxyguanosinetriphosphate triphosphohydrolase (505 aa).

An HD domain is found at 66 to 273; it reads RLTHSMEVQQ…MEAADDISYC (208 aa).

This sequence belongs to the dGTPase family. Type 1 subfamily. In terms of assembly, homotetramer. Mg(2+) serves as cofactor.

It catalyses the reaction dGTP + H2O = 2'-deoxyguanosine + triphosphate + H(+). DGTPase preferentially hydrolyzes dGTP over the other canonical NTPs. The protein is Deoxyguanosinetriphosphate triphosphohydrolase of Escherichia coli (strain K12 / MC4100 / BW2952).